Here is a 177-residue protein sequence, read N- to C-terminus: uncharacterized protein (177 aa).

The interval 1–27 is disordered; sequence MSHSRRAAPTQDQCHTPGFPTSRETSG.

This is an uncharacterized protein from Homo sapiens (Human).